We begin with the raw amino-acid sequence, 714 residues long: MKSRYKRLTSLALSLSMALGISLPAWASPDTSVDNKVNFSTDVIYQIVTDRFADGDRTNNPAGDAFSGDRSNLKLYFGGDWQGIIDKINDGYLTGMGVTALWISQPVENITSVIKYSGVNNTSYHGYWARDFKQTNDAFGDFADFQNLIDTAHAHNIKVVIDFAPNHTSPADRDNPGFAENGGMYDNGSLLGAYSNDTAGLFHHNGGTDFSTIEDGIYKNLYDLADINHNNNAMDAYFKSAIDLWLGMGVDGIRFDAVKHMPFGWQKSFVSSIYGGDHPVFTFGEWYLGADQTDGDNIKFANESGMNLLDFEYAQEVREVFRDKTETMKDLYEVLASTESQYDYINNMVTFIDNHDMDRFQVAGSGTRATEQALALTLTSRGVPAIYYGTEQYMTGDGDPNNRAMMTSFNTGTTAYKVIQALAPLRKSNPAIAYGTTTERWVNNDVLIIERKFGSSAALVAINRNSSAAYPISGLLSSLPAGTYSDVLNGLLNGNSITVGSGGAVTNFTLAAGGTAVWQYTAPETSPAIGNVGPTMGQPGNIVTIDGRGFGGTAGTVYFGTTAVTGSGIVSWEDTQIKAVIPKVAAGKTGVSVKTSSGTASNTFKSFNVLTGDQVTVRFLVNQANTNYGTNVYLVGNAAELGSWDPNKAIGPMYNQVIAKYPSWYYDVSVPAGTKLDFKFIKKGGGTVTWEGGGNHTYTTPASGVGTVTVDWQN.

The first 27 residues, 1–27 (MKSRYKRLTSLALSLSMALGISLPAWA), serve as a signal peptide directing secretion. The A1 stretch occupies residues 28-165 (SPDTSVDNKV…NIKVVIDFAP (138 aa)). Residues Asp54, Asn59, Asn60, Gly78, and Asp80 each contribute to the Ca(2+) site. Residue 127–128 (YW) coordinates substrate. Asn166 serves as a coordination point for Ca(2+). The b stretch occupies residues 166–229 (NHTSPADRDN…NLYDLADINH (64 aa)). His167 is a binding site for substrate. A Ca(2+)-binding site is contributed by Ile217. A substrate-binding site is contributed by 220-223 (NLYD). A Ca(2+)-binding site is contributed by Asp226. The segment at 230–434 (NNNAMDAYFK…LRKSNPAIAY (205 aa)) is A2. Substrate is bound at residue Arg254. The active-site Nucleophile is the Asp256. 259–260 (KH) is a binding site for substrate. His260 lines the Ca(2+) pocket. The active-site Proton donor is Glu285. Substrate contacts are provided by His355, Asp399, and Arg403. The c stretch occupies residues 435–523 (GTTTERWVNN…GTAVWQYTAP (89 aa)). The d stretch occupies residues 524–610 (ETSPAIGNVG…SNTFKSFNVL (87 aa)). Residues 527 to 607 (PAIGNVGPTM…GTASNTFKSF (81 aa)) enclose the IPT/TIG domain. The region spanning 609 to 714 (VLTGDQVTVR…VGTVTVDWQN (106 aa)) is the CBM20 domain. Positions 611 to 714 (TGDQVTVRFL…VGTVTVDWQN (104 aa)) are e.

This sequence belongs to the glycosyl hydrolase 13 family. As to quaternary structure, monomer. It depends on Ca(2+) as a cofactor.

The protein resides in the secreted. It carries out the reaction Cyclizes part of a (1-&gt;4)-alpha-D-glucan chain by formation of a (1-&gt;4)-alpha-D-glucosidic bond.. This Paenibacillus macerans (Bacillus macerans) protein is Cyclomaltodextrin glucanotransferase (cgtM).